The chain runs to 187 residues: Ras-like protein rasD (187 aa).

GTP is bound at residue 10-17 (GGGGVGKS). Residues 32–40 (YDPTIEDSY) carry the Effector region motif. GTP is bound by residues 57–61 (DTAGQ) and 116–119 (NKAD). A Cysteine methyl ester modification is found at cysteine 184. The S-geranylgeranyl cysteine moiety is linked to residue cysteine 184. Positions 185–187 (LIL) are cleaved as a propeptide — removed in mature form.

Belongs to the small GTPase superfamily. Ras family.

Its subcellular location is the cell membrane. It carries out the reaction GTP + H2O = GDP + phosphate + H(+). With respect to regulation, alternates between an inactive form bound to GDP and an active form bound to GTP. Activated by a guanine nucleotide-exchange factor (GEF) and inactivated by a GTPase-activating protein (GAP). Functionally, ras proteins bind GDP/GTP and possess intrinsic GTPase activity. This Dictyostelium discoideum (Social amoeba) protein is Ras-like protein rasD (rasD).